A 405-amino-acid chain; its full sequence is Potassium channel subfamily K member 18 (405 aa).

Residues 43–63 form a helical membrane-spanning segment; it reads LPGLCFLCCLVTYALVGAALF. An N-linked (GlcNAc...) asparagine glycan is attached at N94. The segment at residues 125–151 is an intramembrane region (pore-forming); sequence FLSALFFCCTVFSTVGYGHMYPVTRLG. Positions 138, 139, 140, and 141 each coordinate K(+). Positions 138-143 are selectivity filter 1; that stretch reads TVGYGH. The chain crosses the membrane as a helical span at residues 153–173; it reads FLCMLYALFGIPLMFLVLTDI. The interval 221 to 226 is interaction with calcineurin; that stretch reads PQIVID. The tract at residues 272-277 is interaction with YWHAH; sequence RSNSCP. 2 positions are modified to phosphoserine: S275 and S287. Residues 304–324 form a helical membrane-spanning segment; sequence IPLPVIALVIFAYISCAAAIL. Residues 337-351 constitute an intramembrane region (pore-forming); that stretch reads FYFCFVTLTTIGFGD. The segment at 346-351 is selectivity filter 2; that stretch reads TIGFGD. Residues 358 to 378 traverse the membrane as a helical segment; that stretch reads HFFLFFSIYIIVGMEILFIAF.

It belongs to the two pore domain potassium channel (TC 1.A.1.8) family. In terms of assembly, homodimer. Heterodimer with KCNK2. Heterodimer with KCNK10. Interacts with calcineurin. Interacts with YWHAH, in a phosphorylation-dependent manner. Post-translationally, phosphorylation of Ser-275 is required for the binding of 14-3-3eta/YWHAH. Calcineurin-mediated dephosphorylation of Ser-287 enhances channel activity. N-glycosylated.

The protein localises to the cell membrane. It catalyses the reaction K(+)(in) = K(+)(out). Activated by volatile anesthetics, such as isoflurane and inhibited by local anesthetics such as bupivacaine and lidocaine. Inhibited by extracellular acidic pH. Inhibited by Zn(2+) ions. Functionally, k(+) channel that conducts outward and inward rectifying currents at depolarized and hyperpolarized membrane potentials, respectively. The outward rectifying currents are voltage-dependent, coupled to K(+) electrochemical gradient across the membrane, whereas the inward currents can be induced in response to activation of Ca(2+)-mobilizing receptors. Homo- and heterodimerizes to form functional channels with distinct regulatory and gating properties. In trigeminal ganglia sensory neurons, the heterodimers of KCNK18/TRESK and KCNK2/TREK-1 or KCNK10/TREK-2 inhibit neuronal firing and neurogenic inflammation by stabilizing the resting membrane potential at K(+) equilibrium potential as well as by regulating the threshold of action potentials and the spike frequency. In thymocytes, conducts K(+) currents upon T cell receptor (TCR) signaling leading to sustained Ca(2+) influx and NF-kappa-B activation, FOXP3 transcription and positive selection of regulatory T cell (Treg) progenitor subsets. Appears to mediate the analgesics effects of hydroxy-alpha-sanshool, a metabolite naturally present in Schezuan pepper and other Xanthoxylum plants. This is Potassium channel subfamily K member 18 (Kcnk18) from Rattus norvegicus (Rat).